A 189-amino-acid polypeptide reads, in one-letter code: HGPRTase-like protein 1 (189 aa).

It belongs to the purine/pyrimidine phosphoribosyltransferase family. Archaeal HPRT subfamily.

Its function is as follows. May catalyze a purine salvage reaction, the substrate is unknown. This is HGPRTase-like protein 1 from Natrialba magadii (strain ATCC 43099 / DSM 3394 / CCM 3739 / CIP 104546 / IAM 13178 / JCM 8861 / NBRC 102185 / NCIMB 2190 / MS3) (Natronobacterium magadii).